The following is a 463-amino-acid chain: Glycine--tRNA ligase (463 aa).

Substrate contacts are provided by R100 and E175. ATP is bound by residues 207-209, 217-222, 291-292, and 335-338; these read RNE, FRTREF, EL, and GADR. Position 222-226 (222-226) interacts with substrate; the sequence is FEQME. 331-335 is a binding site for substrate; it reads EPSLG.

This sequence belongs to the class-II aminoacyl-tRNA synthetase family. As to quaternary structure, homodimer.

It is found in the cytoplasm. It catalyses the reaction tRNA(Gly) + glycine + ATP = glycyl-tRNA(Gly) + AMP + diphosphate. Functionally, catalyzes the attachment of glycine to tRNA(Gly). This Clostridium tetani (strain Massachusetts / E88) protein is Glycine--tRNA ligase.